The chain runs to 164 residues: Protein DOWNSTREAM OF FLC (164 aa).

Residues 1–23 (MAKSFVPLIAVLCVLVLPLAAMA) form the signal peptide. 3 disulfides stabilise this stretch: cysteine 36–cysteine 107, cysteine 39–cysteine 148, and cysteine 60–cysteine 95.

It belongs to the Ole e I family.

Its subcellular location is the secreted. In terms of biological role, part of a three-gene cluster containing FLC, UFC and DFC, which is coordinately regulated in response to vernalization. Not regulated by FLX. The protein is Protein DOWNSTREAM OF FLC (DFC) of Arabidopsis thaliana (Mouse-ear cress).